The following is a 330-amino-acid chain: Aspartate--ammonia ligase (330 aa).

The protein belongs to the class-II aminoacyl-tRNA synthetase family. AsnA subfamily.

The protein localises to the cytoplasm. The catalysed reaction is L-aspartate + NH4(+) + ATP = L-asparagine + AMP + diphosphate + H(+). It functions in the pathway amino-acid biosynthesis; L-asparagine biosynthesis; L-asparagine from L-aspartate (ammonia route): step 1/1. In Streptococcus equi subsp. equi (strain 4047), this protein is Aspartate--ammonia ligase.